We begin with the raw amino-acid sequence, 141 residues long: Extracellular globin-1 (141 aa).

One can recognise a Globin domain in the interval 1–141 (DCNTLKRFKV…YAVIAAGIKP (141 aa)). Cysteine 2 and cysteine 131 form a disulfide bridge. Histidine 94 contacts heme b.

Belongs to the globin family. The giant hemoglobins of worms are formed of a monomeric subunit and a disulfide-bonded trimer. This subunit is monomeric.

The protein localises to the secreted. This is Extracellular globin-1 from Metaphire sieboldi (Earthworm).